The primary structure comprises 301 residues: Probable 2-oxoglutarate-dependent dioxygenase AOP1 (301 aa).

Residues 158–262 (TYYLTRLMKY…RYSTGLFSIP (105 aa)) form the Fe2OG dioxygenase domain. 3 residues coordinate Fe cation: His186, Asp188, and His243. Residue Arg253 coordinates 2-oxoglutarate.

This sequence belongs to the iron/ascorbate-dependent oxidoreductase family. It depends on Fe(2+) as a cofactor.

Probable 2-oxoglutarate-dependent dioxygenase that may be involved in glucosinolates biosynthesis. May play a role in the production of aliphatic glucosinolates. This is Probable 2-oxoglutarate-dependent dioxygenase AOP1 (AOP1) from Arabidopsis thaliana (Mouse-ear cress).